Here is a 175-residue protein sequence, read N- to C-terminus: MAAVSMSVVLRQTLWRRRAVAVAALSVSRVPTRSLRTSTWRLAQDQTQDTQLITVDEKLDITTLTGVPEEHIKTRKVRIFVPARNNMQSGVNNTKKWKMEFDTRERWENPLMGWASTADPLSNMVLTXSTKEDAVSFAEKNGWSYDIEERKVPKPKSKSYGANFSWNKRTRVSTK.

The N-terminal 42 residues, 1–42 (MAAVSMSVVLRQTLWRRRAVAVAALSVSRVPTRSLRTSTWRL), are a transit peptide targeting the mitochondrion. The interval 149-175 (ERKVPKPKSKSYGANFSWNKRTRVSTK) is disordered.

This sequence belongs to the complex I NDUFS4 subunit family. In terms of assembly, mammalian complex I is composed of 45 different subunits. This is a component of the iron-sulfur (IP) fragment of the enzyme. Interacts with BCAP31 and TOMM40; the interaction mediates its translocation to the mitochondria; the interaction with BCAP31 is direct.

The protein resides in the mitochondrion inner membrane. Functionally, accessory subunit of the mitochondrial membrane respiratory chain NADH dehydrogenase (Complex I), that is believed not to be involved in catalysis. Complex I functions in the transfer of electrons from NADH to the respiratory chain. The immediate electron acceptor for the enzyme is believed to be ubiquinone. This chain is NADH dehydrogenase [ubiquinone] iron-sulfur protein 4, mitochondrial (NDUFS4), found in Pan troglodytes (Chimpanzee).